Here is a 117-residue protein sequence, read N- to C-terminus: Huntingtin-interacting protein M (117 aa).

Basic and acidic residues-rich tracts occupy residues M1 to C11 and Q83 to R97. Disordered regions lie at residues M1 to E25 and N74 to G117.

In terms of assembly, may interact with the N-terminus of HD.

This chain is Huntingtin-interacting protein M, found in Mus musculus (Mouse).